Consider the following 201-residue polypeptide: Proteasome subunit beta type-2 (201 aa).

At M1 the chain carries N-acetylmethionine.

The protein belongs to the peptidase T1B family. As to quaternary structure, the 26S proteasome consists of a 20S proteasome core and two 19S regulatory subunits. The 20S proteasome core is a barrel-shaped complex made of 28 subunits that are arranged in four stacked rings. The two outer rings are each formed by seven alpha subunits, and the two inner rings are formed by seven beta subunits. The proteolytic activity is exerted by three beta-subunits PSMB5, PSMB6 and PSMB7. As to expression, detected in liver (at protein level).

Its subcellular location is the cytoplasm. The protein localises to the nucleus. Its function is as follows. Non-catalytic component of the 20S core proteasome complex involved in the proteolytic degradation of most intracellular proteins. This complex plays numerous essential roles within the cell by associating with different regulatory particles. Associated with two 19S regulatory particles, forms the 26S proteasome and thus participates in the ATP-dependent degradation of ubiquitinated proteins. The 26S proteasome plays a key role in the maintenance of protein homeostasis by removing misfolded or damaged proteins that could impair cellular functions, and by removing proteins whose functions are no longer required. Associated with the PA200 or PA28, the 20S proteasome mediates ubiquitin-independent protein degradation. This type of proteolysis is required in several pathways including spermatogenesis (20S-PA200 complex) or generation of a subset of MHC class I-presented antigenic peptides (20S-PA28 complex). In Mus musculus (Mouse), this protein is Proteasome subunit beta type-2 (Psmb2).